The primary structure comprises 298 residues: Protoheme IX farnesyltransferase (298 aa).

9 helical membrane-spanning segments follow: residues 16–36 (VVAL…PDMP), 45–65 (ALGF…NQLL), 93–113 (VFAG…VNVI), 114–134 (TAVL…VYLK), 141–161 (IVIG…AVTG), 172–192 (SLLV…LAIF), 218–238 (ILVY…VGMS), 241–261 (FYLG…WRML), and 277–297 (IVYL…LPWV).

The protein belongs to the UbiA prenyltransferase family. Protoheme IX farnesyltransferase subfamily.

It localises to the cell inner membrane. The enzyme catalyses heme b + (2E,6E)-farnesyl diphosphate + H2O = Fe(II)-heme o + diphosphate. The protein operates within porphyrin-containing compound metabolism; heme O biosynthesis; heme O from protoheme: step 1/1. Functionally, converts heme B (protoheme IX) to heme O by substitution of the vinyl group on carbon 2 of heme B porphyrin ring with a hydroxyethyl farnesyl side group. The protein is Protoheme IX farnesyltransferase of Xanthomonas axonopodis pv. citri (strain 306).